The following is a 315-amino-acid chain: Peroxidase 4 (315 aa).

The signal sequence occupies residues 1-19 (MAIFKILVLLLSLCCFSQA). Gln-20 carries the post-translational modification Pyrrolidone carboxylic acid. 4 disulfides stabilise this stretch: Cys-30–Cys-110, Cys-63–Cys-68, Cys-116–Cys-311, and Cys-195–Cys-221. The active-site Proton acceptor is His-61. Residues Asp-62, Val-65, Gly-67, Asp-69, and Ser-71 each coordinate Ca(2+). Pro-158 lines the substrate pocket. Residue His-188 participates in heme b binding. Ca(2+) is bound at residue Thr-189. N-linked (GlcNAc...) asparagine glycosylation is present at Asn-205. Ca(2+) is bound by residues Asp-234, Thr-237, and Asp-242.

This sequence belongs to the peroxidase family. Classical plant (class III) peroxidase subfamily. It depends on heme b as a cofactor. Ca(2+) is required as a cofactor.

It is found in the secreted. The enzyme catalyses 2 a phenolic donor + H2O2 = 2 a phenolic radical donor + 2 H2O. Removal of H(2)O(2), oxidation of toxic reductants, biosynthesis and degradation of lignin, suberization, auxin catabolism, response to environmental stresses such as wounding, pathogen attack and oxidative stress. These functions might be dependent on each isozyme/isoform in each plant tissue. This chain is Peroxidase 4 (PER4), found in Arabidopsis thaliana (Mouse-ear cress).